The following is a 580-amino-acid chain: MAEKRRPLLGFVGKLPSGTTAGNSGKTHCPLCMGLFKAPRLLPCLHTVCTTCLEQLEPFSVVDIRGGESDTSSEGSVFQELKPRALQPQIGILCPVCDAQVDLPMGGVKALTIDHLAMNDVMLESLRGEGQGLVCDLCSDREVEKRCQTCKANLCRFCCQAHRRQKKTTYHTMVDLKDLKGYSQIGKPILCPAHPAEELRLFCELCDRPVCRDCVVGEHREHPCDFTSNVIHKHGDSVRELLRGTQPHVEALEEALAQIKGTNSAVQERVKAVAADIRTFSEGYIKAIEEHRDKLLKQLEDIRVQKENSLQLQKAQLEQLLADMRTGVEFTEHLLTSGSDLEILITKGVVVERLTKLNKVEYSAHPGVNEKISFSPKQKAGLCRGYEVYGAINTKEVDPAKCVLQGEDLHRAREKQPASFIVLCKDATGESMGRGGDNVQVTVIPNDKKDSPVKTMVHDNKDGTYYVSYTPKEPGTYTVLVCVKEQHVQGSPFTVTVRKRHRSHPGVFHCCTFCSSGGQKTARCACGGTMPGGYLGCGHGHKGHPGRPHWSCCGKFAEKSECTWAGGQSAPRSLLRTVAL.

An RING-type zinc finger spans residues 29 to 98; it reads CPLCMGLFKA…QIGILCPVCD (70 aa). B box-type zinc fingers lie at residues 130-176 and 186-227; these read GQGL…MVDL and GKPI…CDFT. Zn(2+) is bound by residues C135, C138, C158, H162, C191, H194, C214, and H219. Positions 281-335 form a coiled coil; that stretch reads SEGYIKAIEEHRDKLLKQLEDIRVQKENSLQLQKAQLEQLLADMRTGVEFTEHLL. One copy of the Filamin repeat lies at 394 to 497; that stretch reads TKEVDPAKCV…VQGSPFTVTV (104 aa).

This sequence belongs to the TRIM/RBCC family.

The protein localises to the cytoplasm. It is found in the nucleus. It catalyses the reaction S-ubiquitinyl-[E2 ubiquitin-conjugating enzyme]-L-cysteine + [acceptor protein]-L-lysine = [E2 ubiquitin-conjugating enzyme]-L-cysteine + N(6)-ubiquitinyl-[acceptor protein]-L-lysine.. E3 ubiquitin-protein ligase that plays a role in the regulation of inflammatory response. Mechanistically, mediates the 'Lys-48'-linked polyubiquitination of TAB2, a regulatory protein of the kinase TAK1, leading to its degradation via the proteasomal pathway and inhibition of the TLR-mediated inflammatory immune response. May act as a transcriptional repressor in mitogen-activated protein kinase signaling pathway. The sequence is that of E3 ubiquitin-protein ligase TRIM45 (TRIM45) from Bos taurus (Bovine).